We begin with the raw amino-acid sequence, 222 residues long: Orotidine 5'-phosphate decarboxylase (222 aa).

Substrate-binding positions include D11, K30, 59–68, S115, 164–174, G187, and R188; these read DFKLADIGYI and PGMGSQGGSYG. K61 functions as the Proton donor in the catalytic mechanism.

The protein belongs to the OMP decarboxylase family. Type 1 subfamily. In terms of assembly, homodimer.

It catalyses the reaction orotidine 5'-phosphate + H(+) = UMP + CO2. It functions in the pathway pyrimidine metabolism; UMP biosynthesis via de novo pathway; UMP from orotate: step 2/2. Functionally, catalyzes the decarboxylation of orotidine 5'-monophosphate (OMP) to uridine 5'-monophosphate (UMP). This chain is Orotidine 5'-phosphate decarboxylase, found in Saccharolobus solfataricus (strain ATCC 35092 / DSM 1617 / JCM 11322 / P2) (Sulfolobus solfataricus).